The primary structure comprises 323 residues: Transcriptional regulator protein Pur-beta-A (323 aa).

Disordered regions lie at residues 1-34 (MADG…QELA), 100-122 (SPEQ…PRRA), and 286-323 (QERQ…VDDD). A2 carries the post-translational modification N-acetylalanine. The span at 9-19 (ERGGSSGGPGG) shows a compositional bias: gly residues. Positions 24–34 (MSREQETQELA) are enriched in basic and acidic residues. Residues 27–257 (EQETQELATK…LRVSEVKPSY (231 aa)) form a DNA-binding region. The span at 286–305 (QERQRDKMYERRGPGDRERS) shows a compositional bias: basic and acidic residues. The span at 313 to 323 (DDSETEDVDDD) shows a compositional bias: acidic residues.

Belongs to the PUR DNA-binding protein family.

It is found in the nucleus. Transcriptional regulator which can act as an activator or a repressor. The sequence is that of Transcriptional regulator protein Pur-beta-A (purb-a) from Xenopus laevis (African clawed frog).